The chain runs to 259 residues: Ribosome maturation factor RimP (259 aa).

The segment at 198–259 (SLGLAPEPPP…RGEIDTSEGD (62 aa)) is disordered. Residues 243-253 (LAADKARRGEI) are compositionally biased toward basic and acidic residues.

It belongs to the RimP family.

The protein localises to the cytoplasm. Its function is as follows. Required for maturation of 30S ribosomal subunits. The sequence is that of Ribosome maturation factor RimP from Rhodopseudomonas palustris (strain TIE-1).